A 450-amino-acid polypeptide reads, in one-letter code: Glucose-6-phosphate isomerase (450 aa).

At T39 the chain carries Phosphothreonine. The active-site Proton donor is the E291. Residues H312 and K426 contribute to the active site.

This sequence belongs to the GPI family.

It localises to the cytoplasm. It catalyses the reaction alpha-D-glucose 6-phosphate = beta-D-fructose 6-phosphate. The protein operates within carbohydrate biosynthesis; gluconeogenesis. Its pathway is carbohydrate degradation; glycolysis; D-glyceraldehyde 3-phosphate and glycerone phosphate from D-glucose: step 2/4. In terms of biological role, catalyzes the reversible isomerization of glucose-6-phosphate to fructose-6-phosphate. This is Glucose-6-phosphate isomerase from Bacillus anthracis.